The primary structure comprises 386 residues: Succinate--CoA ligase [ADP-forming] subunit beta (386 aa).

Residues 9 to 244 (KELLRQYGVA…LDEEDPKEIE (236 aa)) enclose the ATP-grasp domain. ATP is bound by residues Lys46, 53–55 (GRG), Glu99, Cys102, and Glu107. Mg(2+)-binding residues include Asn199 and Asp213. Substrate contacts are provided by residues Asn264 and 321 to 323 (GIM).

This sequence belongs to the succinate/malate CoA ligase beta subunit family. As to quaternary structure, heterotetramer of two alpha and two beta subunits. It depends on Mg(2+) as a cofactor.

The catalysed reaction is succinate + ATP + CoA = succinyl-CoA + ADP + phosphate. The enzyme catalyses GTP + succinate + CoA = succinyl-CoA + GDP + phosphate. It participates in carbohydrate metabolism; tricarboxylic acid cycle; succinate from succinyl-CoA (ligase route): step 1/1. Its function is as follows. Succinyl-CoA synthetase functions in the citric acid cycle (TCA), coupling the hydrolysis of succinyl-CoA to the synthesis of either ATP or GTP and thus represents the only step of substrate-level phosphorylation in the TCA. The beta subunit provides nucleotide specificity of the enzyme and binds the substrate succinate, while the binding sites for coenzyme A and phosphate are found in the alpha subunit. In Halalkalibacterium halodurans (strain ATCC BAA-125 / DSM 18197 / FERM 7344 / JCM 9153 / C-125) (Bacillus halodurans), this protein is Succinate--CoA ligase [ADP-forming] subunit beta.